Here is a 239-residue protein sequence, read N- to C-terminus: MGQKINPLGFRLGTTQKHHSFWFAQPKNYSEGLQEDKKIRDCIKNYIQKNRKKGSNRKIESDSSSEVITHNRKMDSGSSSEVITHIEIQKEIDTIHVIIHIGFPNLLKKKGAIEELEKDLQKEINSVNQRFNISIEKVKEPYRQPNILAEYIAFQLKNRVSFRKAMKKAIELTKKADIRGVKVKIAGRLGGKEIARAESIKKGRLPLQTIRAKIDYCCYPIRTIYGVLGVKIWIFVDEE.

The 97-residue stretch at 43 to 139 (IKNYIQKNRK…RFNISIEKVK (97 aa)) folds into the KH type-2 domain. A disordered region spans residues 50 to 74 (NRKKGSNRKIESDSSSEVITHNRKM).

This sequence belongs to the universal ribosomal protein uS3 family. Part of the 30S ribosomal subunit.

It is found in the plastid. Its subcellular location is the chloroplast. This Triticum aestivum (Wheat) protein is Small ribosomal subunit protein uS3c (rps3).